A 200-amino-acid chain; its full sequence is Protein GrpE (200 aa).

Composition is skewed to acidic residues over residues 1 to 17 and 34 to 44; these read MNEQ…EQFD and AFAEAGEETRD. Residues 1–49 form a disordered region; sequence MNEQPNEELQSEDEQFDPQETVSFEGETAANDEAFAEAGEETRDEEMTR.

It belongs to the GrpE family. As to quaternary structure, homodimer.

Its subcellular location is the cytoplasm. Participates actively in the response to hyperosmotic and heat shock by preventing the aggregation of stress-denatured proteins, in association with DnaK and GrpE. It is the nucleotide exchange factor for DnaK and may function as a thermosensor. Unfolded proteins bind initially to DnaJ; upon interaction with the DnaJ-bound protein, DnaK hydrolyzes its bound ATP, resulting in the formation of a stable complex. GrpE releases ADP from DnaK; ATP binding to DnaK triggers the release of the substrate protein, thus completing the reaction cycle. Several rounds of ATP-dependent interactions between DnaJ, DnaK and GrpE are required for fully efficient folding. The polypeptide is Protein GrpE (Rhodopirellula baltica (strain DSM 10527 / NCIMB 13988 / SH1)).